A 600-amino-acid chain; its full sequence is tRNA(Ile)-lysidine synthase, chloroplastic (600 aa).

Residue 35–40 (SGGQDS) participates in ATP binding.

It belongs to the tRNA(Ile)-lysidine synthase family.

The protein localises to the plastid. The protein resides in the chloroplast. It carries out the reaction cytidine(34) in tRNA(Ile2) + L-lysine + ATP = lysidine(34) in tRNA(Ile2) + AMP + diphosphate + H(+). Functionally, ligates lysine onto the cytidine present at position 34 of the AUA codon-specific tRNA(Ile) that contains the anticodon CAU, in an ATP-dependent manner. Cytidine is converted to lysidine, thus changing the amino acid specificity of the tRNA from methionine to isoleucine. In Tupiella akineta (Green alga), this protein is tRNA(Ile)-lysidine synthase, chloroplastic.